A 523-amino-acid polypeptide reads, in one-letter code: Mediator of RNA polymerase II transcription subunit 1.2 (523 aa).

This sequence belongs to the Mediator complex subunit 1 family. Component of the Mediator complex.

The protein resides in the nucleus. Its function is as follows. Component of the Mediator complex, a coactivator involved in the regulated transcription of nearly all RNA polymerase II-dependent genes. Mediator functions as a bridge to convey information from gene-specific regulatory proteins to the basal RNA polymerase II transcription machinery. Mediator is recruited to promoters by direct interactions with regulatory proteins and serves as a scaffold for the assembly of a functional preinitiation complex with RNA polymerase II and the general transcription factors. This chain is Mediator of RNA polymerase II transcription subunit 1.2 (mdt-1.2), found in Caenorhabditis briggsae.